The primary structure comprises 359 residues: Type-1 angiotensin II receptor (359 aa).

Topologically, residues 1–25 (MVPNYSTEETVKRIHVDCPVSGRHS) are extracellular. Residue Asn-4 is glycosylated (N-linked (GlcNAc...) asparagine). Asp-17 contacts angiotensin II. 2 disulfides stabilise this stretch: Cys-18–Cys-274 and Cys-101–Cys-180. A helical membrane pass occupies residues 26–55 (YIYIMVPTVYSIIFIIGIFGNSLVVIVIYC). Over 56-61 (YMKLKT) the chain is Cytoplasmic. The helical transmembrane segment at 62 to 89 (VASIFLLNLALADLCFLITLPLWAAYTA) threads the bilayer. Topologically, residues 90 to 98 (MEYQWPFGN) are extracellular. Residues 99 to 125 (CLCKLASAGISFNLYASVFLLTCLSID) traverse the membrane as a helical segment. Residues 126 to 141 (RYLAIVHPVKSRIRRT) lie on the Cytoplasmic side of the membrane. A helical transmembrane segment spans residues 142 to 165 (MFVARVTCIVIWLLAGVASLPVII). Over 166–190 (HRNIFFAENLNMTVCGFRYDNNNTT) the chain is Extracellular. Arg-167 is a binding site for angiotensin II. Asn-176 carries an N-linked (GlcNAc...) asparagine glycan. Angiotensin II-binding residues include Phe-182 and Tyr-184. N-linked (GlcNAc...) asparagine glycosylation is found at Asn-187 and Asn-188. A helical transmembrane segment spans residues 191–216 (LRVGLGLSKNLLGFLIPFLIILTSYT). Position 199 (Lys-199) interacts with angiotensin II. At 217–239 (LIWKTLKKAYQIQRNKTRNDDIF) the chain is on the cytoplasmic side. Residues 240–268 (KMIVAIVFFFFFSWIPHQVFTFLDVLIQL) form a helical membrane-spanning segment. Over 269-278 (HVITDCKITD) the chain is Extracellular. The helical transmembrane segment at 279–304 (IVDTAMPFTICIAYFNNCLNPFFYVF) threads the bilayer. Over 305-359 (FGKNFKKYFLQLIKYIPPNVSTHPSLTTKMSSLSYRPPENIRLPTKKTAGSFDAE) the chain is Cytoplasmic.

Belongs to the G-protein coupled receptor 1 family. C-terminal Ser or Thr residues may be phosphorylated.

The protein resides in the cell membrane. Functionally, receptor for angiotensin II, a vasoconstricting peptide, which acts as a key regulator of blood pressure and sodium retention by the kidney. The activated receptor in turn couples to G-alpha proteins G(q) (GNAQ, GNA11, GNA14 or GNA15) and thus activates phospholipase C and increases the cytosolic Ca(2+) concentrations, which in turn triggers cellular responses such as stimulation of protein kinase C. This is Type-1 angiotensin II receptor (AGTR1) from Gallus gallus (Chicken).